A 146-amino-acid polypeptide reads, in one-letter code: Small ribosomal subunit protein bS16 (146 aa).

The tract at residues 119–146 is disordered; sequence GSENKGGKSKKAEEKSAEKTAEKSEGEA. Basic and acidic residues predominate over residues 128–146; sequence KKAEEKSAEKTAEKSEGEA.

This sequence belongs to the bacterial ribosomal protein bS16 family.

This is Small ribosomal subunit protein bS16 from Thermobifida fusca (strain YX).